Consider the following 535-residue polypeptide: Probable C4-dicarboxylate sensor kinase (535 aa).

The Cytoplasmic portion of the chain corresponds to 1–11 (MNKKKLSIRWK). Residues 12–32 (ITILSYILVIFSFLIGGIVLI) form a helical membrane-spanning segment. At 33-172 (GNIQHTEERE…IADILLHLKR (140 aa)) the chain is on the extracellular side. A helical membrane pass occupies residues 173–193 (DIAFIVVLTLGFGLAGSFLLA). Residues 194–535 (RHIKKQMFQL…MKGEEAQHGS (342 aa)) lie on the Cytoplasmic side of the membrane. One can recognise a PAS domain in the interval 213–276 (EERTATFHSM…PEIVERNKAV (64 aa)). One can recognise a Histidine kinase domain in the interval 333–528 (VQNHEHMNKL…SFSIVFPMKG (196 aa)). Residue His-336 is modified to Phosphohistidine; by autocatalysis.

The protein localises to the cell membrane. The catalysed reaction is ATP + protein L-histidine = ADP + protein N-phospho-L-histidine.. Functionally, member of the two-component regulatory system DctS/DctR. Probably activates DctR by phosphorylation. Essential for expression of dctP. This Bacillus subtilis (strain 168) protein is Probable C4-dicarboxylate sensor kinase (dctS).